Reading from the N-terminus, the 228-residue chain is Transmembrane protein 186 (228 aa).

Residues 1–93 are Mitochondrial matrix-facing; sequence MDMMMMSTRL…RGLRALSRLK (93 aa). A helical transmembrane segment spans residues 94–112; the sequence is LLQTGITVVLLPTVYYLHL. At 113 to 118 the chain is on the mitochondrial intermembrane side; sequence QGQASV. The helical transmembrane segment at 119–141 threads the bilayer; the sequence is LVLNRSIGIALFAGVMLYSISHF. Over 142–228 the chain is Mitochondrial matrix; that stretch reads VRRVVGMMYL…AFGKVFGSLS (87 aa).

The protein belongs to the TMEM186 family.

It is found in the mitochondrion inner membrane. Its function is as follows. May be required for efficient assembly of the mitochondrial complex I. This chain is Transmembrane protein 186, found in Danio rerio (Zebrafish).